The following is a 263-amino-acid chain: Tetraspanin-7 (263 aa).

The Cytoplasmic segment spans residues M1–N7. The chain crosses the membrane as a helical span at residues L8–I28. Over W29–P45 the chain is Extracellular. A helical membrane pass occupies residues M46–C66. The Cytoplasmic segment spans residues R67–Y75. The helical transmembrane segment at L76–V96 threads the bilayer. Topologically, residues T97–A234 are extracellular. N-linked (GlcNAc...) asparagine glycosylation is present at N180. Residues K235–F255 traverse the membrane as a helical segment. Over R256–W263 the chain is Cytoplasmic.

Belongs to the tetraspanin (TM4SF) family.

It is found in the membrane. Its function is as follows. May be involved in the regulation of cell differentiation. In Arabidopsis thaliana (Mouse-ear cress), this protein is Tetraspanin-7 (TET7).